Here is a 261-residue protein sequence, read N- to C-terminus: tRNA pseudouridine synthase A (261 aa).

The active-site Nucleophile is D51. Residue Y109 coordinates substrate.

Belongs to the tRNA pseudouridine synthase TruA family. In terms of assembly, homodimer.

The catalysed reaction is uridine(38/39/40) in tRNA = pseudouridine(38/39/40) in tRNA. Functionally, formation of pseudouridine at positions 38, 39 and 40 in the anticodon stem and loop of transfer RNAs. In Shewanella sp. (strain MR-7), this protein is tRNA pseudouridine synthase A.